A 100-amino-acid polypeptide reads, in one-letter code: MHLSPQEKDKLLIFSAALLAERRLSRGLKLNYPETVAFLSFQVLEGARDGKSVSQLMSEGTTWLSKSQVMEGIPEMVDEVQIEAVFPDGTKLVTIHNPIN.

Belongs to the urease gamma subunit family. Heterotrimer of UreA (gamma), UreB (beta) and UreC (alpha) subunits. Three heterotrimers associate to form the active enzyme.

Its subcellular location is the cytoplasm. It carries out the reaction urea + 2 H2O + H(+) = hydrogencarbonate + 2 NH4(+). The protein operates within nitrogen metabolism; urea degradation; CO(2) and NH(3) from urea (urease route): step 1/1. In Prochlorococcus marinus (strain MIT 9301), this protein is Urease subunit gamma.